The following is a 60-amino-acid chain: UPF0434 protein YE1549 (60 aa).

It belongs to the UPF0434 family.

This chain is UPF0434 protein YE1549, found in Yersinia enterocolitica serotype O:8 / biotype 1B (strain NCTC 13174 / 8081).